A 1270-amino-acid polypeptide reads, in one-letter code: DNA-directed RNA polymerase subunit beta (1270 aa).

Belongs to the RNA polymerase beta chain family. In terms of assembly, the RNAP catalytic core consists of 2 alpha, 1 beta, 1 beta' and 1 omega subunit. When a sigma factor is associated with the core the holoenzyme is formed, which can initiate transcription.

The catalysed reaction is RNA(n) + a ribonucleoside 5'-triphosphate = RNA(n+1) + diphosphate. DNA-dependent RNA polymerase catalyzes the transcription of DNA into RNA using the four ribonucleoside triphosphates as substrates. This Flavobacterium psychrophilum (strain ATCC 49511 / DSM 21280 / CIP 103535 / JIP02/86) protein is DNA-directed RNA polymerase subunit beta.